Here is a 66-residue protein sequence, read N- to C-terminus: Protein translocase subunit SecE (66 aa).

A helical membrane pass occupies residues 29–49 (LVASTLVVVVAVFIFSLTCLV).

This sequence belongs to the SecE/SEC61-gamma family. As to quaternary structure, component of the Sec protein translocase complex. Heterotrimer consisting of SecY, SecE and SecG subunits. The heterotrimers can form oligomers, although 1 heterotrimer is thought to be able to translocate proteins. Interacts with the ribosome. Interacts with SecDF, and other proteins may be involved. Interacts with SecA.

It localises to the cell inner membrane. Its function is as follows. Essential subunit of the Sec protein translocation channel SecYEG. Clamps together the 2 halves of SecY. May contact the channel plug during translocation. The polypeptide is Protein translocase subunit SecE (Rickettsia rickettsii).